The sequence spans 213 residues: mRNA-decapping protein D9 (213 aa).

The Nudix hydrolase domain occupies 30-209 (KDTHVFAACI…EYLSYIYNML (180 aa)). The Nudix box signature appears at 111–132 (GKLDKKESIKDCLRRELKEESD). E117 contacts Mg(2+). E126 serves as the catalytic Nucleophile. Residues E130 and D151 each coordinate Mg(2+).

It belongs to the Nudix hydrolase family. It depends on Mg(2+) as a cofactor. Mn(2+) is required as a cofactor.

Its function is as follows. Decapping enzyme required for the removal of the 5'-end m7GpppN cap tethered to viral and host mRNAs to allow their decay in cells. May therefore accelerate viral and cellular mRNA turnover to eliminate competing host mRNAs and allow stage-specific synthesis of viral proteins. Acceleration of the turnover of cellular transcripts may even promote the shutoff of host protein synthesis. Does not cleave unmethylated RNAs or RNAs shorter than 24 nucleotides. In Homo sapiens (Human), this protein is mRNA-decapping protein D9.